The following is a 496-amino-acid chain: Probable malate:quinone oxidoreductase (496 aa).

It belongs to the MQO family. The cofactor is FAD.

It carries out the reaction (S)-malate + a quinone = a quinol + oxaloacetate. It functions in the pathway carbohydrate metabolism; tricarboxylic acid cycle; oxaloacetate from (S)-malate (quinone route): step 1/1. The chain is Probable malate:quinone oxidoreductase from Prochlorococcus marinus (strain MIT 9313).